Consider the following 120-residue polypeptide: Fumarate reductase subunit D (120 aa).

The next 3 membrane-spanning stretches (helical) occupy residues 25–45 (FAMLTPVTILVLGILVPLGVI), 55–75 (VAGFVTSIIGALFVIGSISMP), and 100–120 (IACYATAALATVLSIVFIFMI).

The protein belongs to the FrdD family. Part of an enzyme complex containing four subunits: a flavoprotein (FrdA), an iron-sulfur protein (FrdB), and two hydrophobic anchor proteins (FrdC and FrdD).

It localises to the cell inner membrane. Anchors the catalytic components of the fumarate reductase complex to the cell membrane, binds quinones. The protein is Fumarate reductase subunit D of Aliivibrio salmonicida (strain LFI1238) (Vibrio salmonicida (strain LFI1238)).